A 269-amino-acid chain; its full sequence is Putative pyruvate, phosphate dikinase regulatory protein (269 aa).

151-158 (GVSRSSKT) lines the ADP pocket.

It belongs to the pyruvate, phosphate/water dikinase regulatory protein family. PDRP subfamily.

The catalysed reaction is N(tele)-phospho-L-histidyl/L-threonyl-[pyruvate, phosphate dikinase] + ADP = N(tele)-phospho-L-histidyl/O-phospho-L-threonyl-[pyruvate, phosphate dikinase] + AMP + H(+). It catalyses the reaction N(tele)-phospho-L-histidyl/O-phospho-L-threonyl-[pyruvate, phosphate dikinase] + phosphate + H(+) = N(tele)-phospho-L-histidyl/L-threonyl-[pyruvate, phosphate dikinase] + diphosphate. In terms of biological role, bifunctional serine/threonine kinase and phosphorylase involved in the regulation of the pyruvate, phosphate dikinase (PPDK) by catalyzing its phosphorylation/dephosphorylation. The sequence is that of Putative pyruvate, phosphate dikinase regulatory protein from Geobacter sulfurreducens (strain ATCC 51573 / DSM 12127 / PCA).